The chain runs to 400 residues: MSDILSISELNLAKKRVFIRCDFNVPMDEFLNITDDRRIRSAIPTIRYCLDNGCSVVLASHLGRPKSGFEEKFSLKGVAKRLSRLLDRDVIFANDVIGSDAQNKASALKSGEILMLENLRFEKGETKNDEILAGELAKFGEIYINDAFGVCHRAHASVEAITKFYDDEHKAAGFLLQKEINFAQNLIKKPTRPFVAVVGGSKVSGKLQALHNLLPRVDKLIIGGGMAFTFLKSLGENIGNSLLEEELIDDAREILKKGKELGVKIYLPVDVVAAQSFSAESAVKYVTVQEIPSGWMGLDIGPASVRLFKEVLADAQTVWWNGPMGVFEMDKFSKGSIKMSHAIVETHATTVVGGGDTADVVERAGDADEMTFISTGGGASLELIEGKELPGIKPLRKASE.

Residues 22–24 (DFN), Arg-38, 61–64 (HLGR), Arg-120, and Arg-153 contribute to the substrate site. ATP-binding positions include Lys-206, Gly-297, Glu-328, and 354–357 (GGDT).

This sequence belongs to the phosphoglycerate kinase family. In terms of assembly, monomer.

It localises to the cytoplasm. The catalysed reaction is (2R)-3-phosphoglycerate + ATP = (2R)-3-phospho-glyceroyl phosphate + ADP. It functions in the pathway carbohydrate degradation; glycolysis; pyruvate from D-glyceraldehyde 3-phosphate: step 2/5. In Campylobacter curvus (strain 525.92), this protein is Phosphoglycerate kinase.